We begin with the raw amino-acid sequence, 857 residues long: DNA gyrase subunit A (857 aa).

In terms of domain architecture, Topo IIA-type catalytic spans 39-507; sequence LPDVRDGLKP…YEGDMSIEDL (469 aa). The active-site O-(5'-phospho-DNA)-tyrosine intermediate is tyrosine 127. The short motif at 534 to 540 is the GyrA-box element; the sequence is QKRGGKG. A disordered region spans residues 825–857; that stretch reads REAEEVDGDVAVDETAEGAATTGTDEGEAPSAE. The span at 828-840 shows a compositional bias: acidic residues; that stretch reads EEVDGDVAVDETA.

This sequence belongs to the type II topoisomerase GyrA/ParC subunit family. Heterotetramer, composed of two GyrA and two GyrB chains. In the heterotetramer, GyrA contains the active site tyrosine that forms a transient covalent intermediate with DNA, while GyrB binds cofactors and catalyzes ATP hydrolysis.

Its subcellular location is the cytoplasm. The enzyme catalyses ATP-dependent breakage, passage and rejoining of double-stranded DNA.. A type II topoisomerase that negatively supercoils closed circular double-stranded (ds) DNA in an ATP-dependent manner to modulate DNA topology and maintain chromosomes in an underwound state. Negative supercoiling favors strand separation, and DNA replication, transcription, recombination and repair, all of which involve strand separation. Also able to catalyze the interconversion of other topological isomers of dsDNA rings, including catenanes and knotted rings. Type II topoisomerases break and join 2 DNA strands simultaneously in an ATP-dependent manner. The sequence is that of DNA gyrase subunit A from Streptomyces coelicolor (strain ATCC BAA-471 / A3(2) / M145).